Reading from the N-terminus, the 151-residue chain is Endoribonuclease YbeY (151 aa).

Zn(2+)-binding residues include His-108, His-112, and Asp-118.

This sequence belongs to the endoribonuclease YbeY family. It depends on Zn(2+) as a cofactor.

The protein resides in the cytoplasm. Its function is as follows. Single strand-specific metallo-endoribonuclease involved in late-stage 70S ribosome quality control and in maturation of the 3' terminus of the 16S rRNA. The sequence is that of Endoribonuclease YbeY from Porphyromonas gingivalis (strain ATCC 33277 / DSM 20709 / CIP 103683 / JCM 12257 / NCTC 11834 / 2561).